The primary structure comprises 333 residues: Taste receptor type 2 member 38 (333 aa).

The Extracellular portion of the chain corresponds to 1-17 (MLTLTRICAVSYEVRST). Residues 18–38 (FLFISVLEFAVGFLTNAFIFL) form a helical membrane-spanning segment. The Cytoplasmic portion of the chain corresponds to 39 to 55 (VNFWDVVKRQPLSNSDC). A helical transmembrane segment spans residues 56–76 (VLLCLSISRLFLHGLLFLSAI). Topologically, residues 77–94 (QLTHFQKLSEPLNHSYQA) are extracellular. Residues 95–115 (IIMLWIIANQANLWLAACLSL) traverse the membrane as a helical segment. At 116–142 (LYCSKLIRFSHTFLICLASWVSRKISQ) the chain is on the cytoplasmic side. The chain crosses the membrane as a helical span at residues 143-163 (MLLGIILCSCICTVLCVWCFF). Topologically, residues 164–190 (SRPHFTVTTFLFMNNNTRLNWQIKDLN) are extracellular. The N-linked (GlcNAc...) asparagine glycan is linked to Asn178. Residues 191–211 (LFYSFLFCYLWSVPPFLLFLV) traverse the membrane as a helical segment. Over 212–251 (SSGMLTVSLGRHMRTMKVYTRDSRDPSLEAHIKALKSLVS) the chain is Cytoplasmic. Residues 252–272 (FFCFFVISSCAAFISVPLLIL) form a helical membrane-spanning segment. Topologically, residues 273–276 (WRNK) are extracellular. The helical transmembrane segment at 277–297 (IGVMVCVGIMAACPSGHAAVL) threads the bilayer. The Cytoplasmic portion of the chain corresponds to 298-333 (ISGNATLRRAVTTILLWAQSSMKVRADHKADSRTLC).

This sequence belongs to the G-protein coupled receptor T2R family.

The protein localises to the membrane. Receptor that may play a role in the perception of bitterness and is gustducin-linked. May play a role in sensing the chemical composition of the gastrointestinal content. The activity of this receptor may stimulate alpha gustducin, mediate PLC-beta-2 activation and lead to the gating of TRPM5. This is Taste receptor type 2 member 38 (TAS2R38) from Pongo pygmaeus (Bornean orangutan).